Reading from the N-terminus, the 689-residue chain is Glycine--tRNA ligase beta subunit (689 aa).

Belongs to the class-II aminoacyl-tRNA synthetase family. Tetramer of two alpha and two beta subunits.

The protein localises to the cytoplasm. The enzyme catalyses tRNA(Gly) + glycine + ATP = glycyl-tRNA(Gly) + AMP + diphosphate. The polypeptide is Glycine--tRNA ligase beta subunit (Coxiella burnetii (strain RSA 331 / Henzerling II)).